The following is a 237-amino-acid chain: Fibroblast growth factor 3 (237 aa).

Positions 1–21 (MVIIWILLLSFISCGPQVSWA) are cleaved as a signal peptide. The N-linked (GlcNAc...) asparagine glycan is linked to Asn83.

It belongs to the heparin-binding growth factors family.

Plays an important role in the regulation of embryonic development, cell proliferation, and cell differentiation. The polypeptide is Fibroblast growth factor 3 (fgf3) (Xenopus laevis (African clawed frog)).